A 517-amino-acid chain; its full sequence is Gallate 1-beta-glucosyltransferase 84A24 (517 aa).

His-19 (proton acceptor) is an active-site residue. Residue His-19 coordinates an anthocyanidin. Positions 344, 359, 362, 363, 364, and 367 each coordinate UDP-alpha-D-glucose. Gly-382 is a binding site for an anthocyanidin. Positions 383 and 384 each coordinate UDP-alpha-D-glucose.

It belongs to the UDP-glycosyltransferase family. In terms of tissue distribution, highly expressed in leaf. Also expressed in peel, stem, root and aril.

It is found in the cytoplasm. The catalysed reaction is 3,4,5-trihydroxybenzoate + UDP-alpha-D-glucose = 1-O-galloyl-beta-D-glucose + UDP. The enzyme catalyses 3,4-dihydroxybenzoate + UDP-alpha-D-glucose = 1-O-(3,4-dihydroxy-benzoyl)-beta-D-glucose + UDP. It catalyses the reaction 4-hydroxybenzoate + UDP-alpha-D-glucose = 4-(beta-D-glucosyloxy)benzoate + UDP + H(+). It carries out the reaction (E)-cinnamate + UDP-alpha-D-glucose = 1-O-(trans-cinnamoyl)-beta-D-glucose + UDP. The catalysed reaction is (E)-sinapate + UDP-alpha-D-glucose = 1-O-(trans-sinapoyl)-beta-D-glucose + UDP. The enzyme catalyses (E)-4-coumarate + UDP-alpha-D-glucose = 1-O-(trans-4-coumaroyl)-beta-D-glucose + UDP. It catalyses the reaction (E)-caffeate + UDP-alpha-D-glucose = 1-O-[(E)-caffeoyl]-beta-D-glucose + UDP. It carries out the reaction (E)-ferulate + UDP-alpha-D-glucose = 1-O-[(E)-feruloyl]-beta-D-glucose + UDP. The catalysed reaction is genistein + UDP-alpha-D-glucose = genistein 7-O-beta-D-glucoside + UDP + H(+). The enzyme catalyses apigenin + UDP-alpha-D-glucose = apigenin 7-O-beta-D-glucoside + UDP + H(+). It catalyses the reaction luteolin + UDP-alpha-D-glucose = luteolin 7-O-beta-D-glucoside + UDP + H(+). Its function is as follows. Glucosyltransferase that catalyzes the formation of 1-O-beta-D-glucose esters with hydroxybenzoic acids and cinnamic acid including its derivatives as preferred glucosyl acceptors. Has significant activity with gallic acid (3,4,5-trihydroxybenzoic acid), 3,4-dihydroxybenzoic acid, 4-hydroxybenzoic acid, cinnamic acid, sinapic acid, coumaric acid, caffeic acid and ferulic acid in vitro. Gallic acid is the predicted native substrate of the enzyme, which thus catalyzes the formation of 1-O-galloyl-beta-D-glucose, the first committed step of hydrolyzable tannins (HTs) biosynthesis, with punicalagin isomers being the major HTs of pomegranate. Catalyzes the formation of flavonoid glucosides with genistein, apigenin and luteolin in vitro. Has low activity with benzoic acid, 2-hydroxybenzoic acid, 3-hydroxybenzoic acid, 2,4-dihydroxybenzoic acid, naringenin and quercetin. No activity with catechol, resveratrol, chlorogenic acid, catechin and epicatechin (building blocks of proanthocyanidins) or cyanidin, delphinidin and pelargonidin (the three anthocyanidins). This Punica granatum (Pomegranate) protein is Gallate 1-beta-glucosyltransferase 84A24.